A 115-amino-acid polypeptide reads, in one-letter code: MAAESTLRGKDSTCSTIKLQFLLILSIILKRSSFVSQFSKSSFIPFNAEFIPLSEYTRTELQSAYCRREPLYKERRVQHDFRFPAPSIYQDPIYIFDQFRKPFNIFFNEAEQLSV.

This is an uncharacterized protein from Human herpesvirus 6A (strain Uganda-1102) (HHV-6 variant A).